The following is a 645-amino-acid chain: Threonine--tRNA ligase (645 aa).

Residues 1-63 enclose the TGS domain; it reads MEQINIQFPD…ETDGSIEIVT (63 aa). Residues 242–540 are catalytic; that stretch reads DHRKIGKELE…LTEETKGAFP (299 aa). Residues Cys-336, His-387, and His-517 each contribute to the Zn(2+) site.

Belongs to the class-II aminoacyl-tRNA synthetase family. As to quaternary structure, homodimer. Zn(2+) is required as a cofactor.

The protein resides in the cytoplasm. It catalyses the reaction tRNA(Thr) + L-threonine + ATP = L-threonyl-tRNA(Thr) + AMP + diphosphate + H(+). Its function is as follows. Catalyzes the attachment of threonine to tRNA(Thr) in a two-step reaction: L-threonine is first activated by ATP to form Thr-AMP and then transferred to the acceptor end of tRNA(Thr). Also edits incorrectly charged L-seryl-tRNA(Thr). The chain is Threonine--tRNA ligase from Staphylococcus aureus (strain NCTC 8325 / PS 47).